A 761-amino-acid polypeptide reads, in one-letter code: Ribonucleoside-diphosphate reductase subunit alpha (761 aa).

The 91-residue stretch at 5–95 (LFVTKRDGRK…IFHLRKKAYG (91 aa)) folds into the ATP-cone domain. ATP is bound by residues lysine 9, 15–21 (EKINLDK), threonine 55, and lysine 91. Threonine 209 provides a ligand contact to GDP. An intrachain disulfide couples cysteine 225 to cysteine 462. DTTP contacts are provided by residues 232 to 234 (DSL), arginine 262, and arginine 269. Asparagine 437 serves as a coordination point for GDP. The Proton acceptor role is filled by asparagine 437. Catalysis depends on cysteine 439, which acts as the Cysteine radical intermediate. Residues glutamate 441 and 623 to 625 (ETS) each bind GDP. Glutamate 441 acts as the Proton acceptor in catalysis.

Belongs to the ribonucleoside diphosphate reductase large chain family. Tetramer of two alpha and two beta subunits.

The catalysed reaction is a 2'-deoxyribonucleoside 5'-diphosphate + [thioredoxin]-disulfide + H2O = a ribonucleoside 5'-diphosphate + [thioredoxin]-dithiol. With respect to regulation, under complex allosteric control mediated by deoxynucleoside triphosphates and ATP binding to separate specificity and activation sites on the alpha subunit. The type of nucleotide bound at the specificity site determines substrate preference. It seems probable that ATP makes the enzyme reduce CDP and UDP, dGTP favors ADP reduction and dTTP favors GDP reduction. Stimulated by ATP and inhibited by dATP binding to the activity site. Functionally, provides the precursors necessary for DNA synthesis. Catalyzes the biosynthesis of deoxyribonucleotides from the corresponding ribonucleotides. This chain is Ribonucleoside-diphosphate reductase subunit alpha (nrdA), found in Buchnera aphidicola subsp. Acyrthosiphon pisum (strain APS) (Acyrthosiphon pisum symbiotic bacterium).